The following is a 444-amino-acid chain: Homogentisate 1,2-dioxygenase (444 aa).

The active-site Proton acceptor is the His-298. Fe cation is bound by residues His-341 and Glu-347. Homogentisate-binding residues include Tyr-356 and His-377. His-377 is a Fe cation binding site.

The protein belongs to the homogentisate dioxygenase family. Hexamer; dimer of trimers. It depends on Fe cation as a cofactor.

It catalyses the reaction homogentisate + O2 = 4-maleylacetoacetate + H(+). Its pathway is amino-acid degradation; L-phenylalanine degradation; acetoacetate and fumarate from L-phenylalanine: step 4/6. Its function is as follows. Involved in the catabolism of homogentisate (2,5-dihydroxyphenylacetate or 2,5-OH-PhAc), a central intermediate in the degradation of phenylalanine and tyrosine. Catalyzes the oxidative ring cleavage of the aromatic ring of homogentisate to yield maleylacetoacetate. This Burkholderia ambifaria (strain MC40-6) protein is Homogentisate 1,2-dioxygenase.